Here is a 153-residue protein sequence, read N- to C-terminus: Aspartate carbamoyltransferase regulatory chain (153 aa).

Positions 109, 114, 138, and 141 each coordinate Zn(2+).

The protein belongs to the PyrI family. As to quaternary structure, contains catalytic and regulatory chains. The cofactor is Zn(2+).

Functionally, involved in allosteric regulation of aspartate carbamoyltransferase. The polypeptide is Aspartate carbamoyltransferase regulatory chain (Klebsiella pneumoniae subsp. pneumoniae (strain ATCC 700721 / MGH 78578)).